Consider the following 157-residue polypeptide: NudC domain-containing protein 2 (157 aa).

An N-acetylserine modification is found at Ser-2. Positions 14–104 constitute a CS domain; sequence CGTPWGQWYQ…DAANCWTSLL (91 aa). Residues 134–157 form a disordered region; it reads FDFSGAEISGNYTKGGPDFSNLEK. At Ser-142 the chain carries Phosphoserine. Tyr-145 carries the phosphotyrosine modification.

In terms of assembly, interacts with LIS1.

The protein resides in the chromosome. It localises to the centromere. Its subcellular location is the kinetochore. The protein localises to the cytoplasm. It is found in the cytoskeleton. The protein resides in the microtubule organizing center. It localises to the centrosome. Its subcellular location is the spindle pole. May regulate the LIS1/dynein pathway by stabilizing LIS1 with Hsp90 chaperone. The polypeptide is NudC domain-containing protein 2 (NUDCD2) (Homo sapiens (Human)).